The chain runs to 315 residues: N-acetyl-D-glutamate racemase (315 aa).

D147, E173, and D196 together coordinate Mg(2+).

This sequence belongs to the mandelate racemase/muconate lactonizing enzyme family. Mg(2+) serves as cofactor.

It carries out the reaction N-acetyl-D-glutamate = N-acetyl-L-glutamate. It functions in the pathway amino-acid degradation. Functionally, racemase involved in a deamination-independent D-glutamate degradation pathway, named the DgcN-DgcA pathway. Catalyzes the conversion of N-acetyl-D-glutamate to N-acetyl-L-glutamate. Also shows racemase activity towards the dipeptide L-Ala-D-Glu, a key constituent of peptidoglycan muropeptides, suggesting that it may also contribute to the degradation of peptidoglycans. The sequence is that of N-acetyl-D-glutamate racemase from Pseudoalteromonas sp.